A 204-amino-acid chain; its full sequence is Small ribosomal subunit protein uS4 (204 aa).

A disordered region spans residues 20-46 (WGRPKSPINKREYGPGEHGQRRRKPSD). Residues 28–38 (NKREYGPGEHG) are compositionally biased toward basic and acidic residues. Positions 93 to 156 (TRLDAVVYRM…RQMPLILEAL (64 aa)) constitute an S4 RNA-binding domain.

It belongs to the universal ribosomal protein uS4 family. In terms of assembly, part of the 30S ribosomal subunit. Contacts protein S5. The interaction surface between S4 and S5 is involved in control of translational fidelity.

Its function is as follows. One of the primary rRNA binding proteins, it binds directly to 16S rRNA where it nucleates assembly of the body of the 30S subunit. In terms of biological role, with S5 and S12 plays an important role in translational accuracy. The polypeptide is Small ribosomal subunit protein uS4 (Rhodospirillum rubrum (strain ATCC 11170 / ATH 1.1.1 / DSM 467 / LMG 4362 / NCIMB 8255 / S1)).